A 286-amino-acid chain; its full sequence is Putative L-ribulose-5-phosphate 3-epimerase SgbU (286 aa).

The protein belongs to the L-ribulose-5-phosphate 3-epimerase family.

The catalysed reaction is L-ribulose 5-phosphate = L-xylulose 5-phosphate. Catalyzes the isomerization of L-xylulose-5-phosphate to L-ribulose-5-phosphate (Potential). May be involved in the utilization of 2,3-diketo-L-gulonate. This is Putative L-ribulose-5-phosphate 3-epimerase SgbU (sgbU) from Escherichia coli (strain K12).